The chain runs to 385 residues: Probable thioesterase PNKD (385 aa).

The segment at 32 to 58 (KASHNRTRALQSHSSPEGKEEPEPLSP) is disordered. The Zn(2+) site is built by histidine 172, histidine 174, aspartate 176, histidine 177, histidine 229, aspartate 253, and histidine 291.

It belongs to the metallo-beta-lactamase superfamily. Glyoxalase II family. In terms of assembly, isoform 2 interacts with the sarcomeric proteins, MRLC2, MYOM1 and ENO3. Requires Zn(2+) as cofactor. Post-translationally, undergoes cleavage at the N-terminus. As to expression, isoform 1 is only expressed in the brain. Isoform 2 is ubiquitously detected with highest expression in skeletal muscle and detected in myocardial myofibrils.

Its subcellular location is the cell membrane. It localises to the mitochondrion. The protein localises to the cytoplasm. It is found in the golgi apparatus. The protein resides in the endoplasmic reticulum. The enzyme catalyses a thioester + H2O = a thiol + a carboxylate + H(+). Probable thioesterase that may play a role in cellular detoxification processes; it likely acts on a yet-unknown alpha-hydroxythioester substrate. In vitro, it is able to catalyze the hydrolysis of S-D-lactoyl-glutathione to form glutathione and D-lactic acid at very low rate, though this reaction is not physiologically relevant in vivo. The chain is Probable thioesterase PNKD (PNKD) from Homo sapiens (Human).